We begin with the raw amino-acid sequence, 375 residues long: 23S rRNA (uracil(747)-C(5))-methyltransferase RlmC (375 aa).

Residues Cys3, Cys11, Cys14, and Cys87 each contribute to the [4Fe-4S] cluster site. 4 residues coordinate S-adenosyl-L-methionine: Gln212, Phe241, Glu262, and Asn307. Cys334 serves as the catalytic Nucleophile.

The protein belongs to the class I-like SAM-binding methyltransferase superfamily. RNA M5U methyltransferase family. RlmC subfamily.

The enzyme catalyses uridine(747) in 23S rRNA + S-adenosyl-L-methionine = 5-methyluridine(747) in 23S rRNA + S-adenosyl-L-homocysteine + H(+). Functionally, catalyzes the formation of 5-methyl-uridine at position 747 (m5U747) in 23S rRNA. In Escherichia coli O127:H6 (strain E2348/69 / EPEC), this protein is 23S rRNA (uracil(747)-C(5))-methyltransferase RlmC.